The primary structure comprises 358 residues: Magnesium-protoporphyrin IX monomethyl ester [oxidative] cyclase (358 aa).

It belongs to the AcsF family. Fe cation is required as a cofactor.

It catalyses the reaction Mg-protoporphyrin IX 13-monomethyl ester + 3 NADPH + 3 O2 + 2 H(+) = 3,8-divinyl protochlorophyllide a + 3 NADP(+) + 5 H2O. It functions in the pathway porphyrin-containing compound metabolism; chlorophyll biosynthesis (light-independent). Its function is as follows. Catalyzes the formation of the isocyclic ring in chlorophyll biosynthesis. Mediates the cyclase reaction, which results in the formation of divinylprotochlorophyllide (Pchlide) characteristic of all chlorophylls from magnesium-protoporphyrin IX 13-monomethyl ester (MgPMME). The sequence is that of Magnesium-protoporphyrin IX monomethyl ester [oxidative] cyclase from Trichodesmium erythraeum (strain IMS101).